A 449-amino-acid chain; its full sequence is Serum response factor homolog (449 aa).

Residues 23–166 are disordered; it reads LADPADMYGN…PPANGKKTKG (144 aa). The span at 69–80 shows a compositional bias: polar residues; the sequence is QCQTLHSPQHAS. The segment covering 81–107 has biased composition (low complexity); the sequence is QQQQQQQQQQQQHQQQQQQQQQHPQQQ. S156 bears the Phosphoserine mark. One can recognise an MADS-box domain in the interval 167–225; the sequence is RVKIKMEYIDNKLRRYTTFSKRKTGIMKKAYELSTLTGTQVMLLVASETGHVYTFATRK. Disordered regions lie at residues 270–360 and 418–449; these read YNIA…GGGS and LTAS…QEFD. Low complexity-rich tracts occupy residues 317–331 and 345–354; these read SAPP…TASS and TNSGPSTSTA.

In terms of tissue distribution, after germ band retraction, high levels of zygotic expression are observed in a distinct subset of peripheral tracheal cells distributed throughout the embryo and low levels in somatic muscle. Expressed in the future intervein tissue of the wing imaginal disk from the third instar larvae until eclosion of the adult fly (at protein level).

The protein resides in the nucleus. Required for the formation of intervein tissue of the wing. Acts in a dosage-dependent manner to suppress wing vein formation and promote development of intervein cells. Might play a role in the proper formation and maintenance of the trachea. This is Serum response factor homolog (bs) from Drosophila melanogaster (Fruit fly).